A 1627-amino-acid chain; its full sequence is Surface protein G (1627 aa).

A signal peptide spans 1 to 50 (MRDKKGPVNKRVDFLSNKLNKYSIRKFTVGTASILIGSLMYLGTQQEAEA). Positions 22–33 (YSIRKFTVGTAS) match the YSIRK-G/S signaling motif motif. The tract at residues 51–418 (AENNIENPTT…KGSEFTFTPE (368 aa)) is ligand binding A region, squamous nasal epithelial cell binding. Disordered stretches follow at residues 74-143 (EVTN…VRKA), 440-467 (KFNP…TTPT), and 496-1601 (EYGP…TGLE). Basic and acidic residues-rich tracts occupy residues 96–120 (DTIE…KEVA), 451–461 (KVTREGQKGEK), 505–523 (GHRD…EEVP), 554–570 (SIVE…RKFN), 579–589 (KVTREGQKGEK), 606–619 (SKGE…KDPI), 633–651 (GHRD…EEVP), 682–698 (SIVE…RKFN), 707–717 (KVTREGQKGEK), 736–747 (GEPKEEITKDPI), 761–779 (GHRD…EEVP), 810–826 (SIVE…RKFN), 835–845 (KVTREGQKGEK), 862–875 (SKGE…KDPI), 889–907 (GHRD…EEVP), 938–954 (SIVE…RKFN), 963–973 (KVTREGQKGEK), 990–1003 (SKGE…KDPI), 1017–1035 (GHRD…EEVP), 1066–1082 (SIVE…RKFN), 1091–1101 (KVTREGQKGEK), 1118–1131 (SKGE…KDPI), 1145–1163 (GHRD…EEVP), 1194–1210 (SIVE…RKFN), 1219–1229 (KVTREGQKGEK), 1246–1259 (SKGE…KDPI), 1273–1291 (GHRD…EEVP), 1322–1338 (SIVE…RKFN), 1347–1357 (KVTREGQKGEK), 1374–1387 (SKGE…KDPV), 1431–1442 (KVIEEPVDDVIK), and 1459–1478 (FETK…RVKQ). Residues 419-501 (APKTITELEK…NELTEYGPET (83 aa)) form the G5 1 domain. Positions 547-629 (YGPVKGDSIV…NELTEYGPET (83 aa)) constitute a G5 2 domain. A G5 3 domain is found at 675–757 (YGPVKGDSIV…NELTEYGPET (83 aa)). Residues 803-885 (YGPVKGDSIV…NELTEYGPET (83 aa)) enclose the G5 4 domain. The G5 5 domain maps to 931-1013 (YGPVKGDSIV…NELTEYGPET (83 aa)). Residues 1059-1141 (YGPVKGDSIV…NELTEYGPET (83 aa)) form the G5 6 domain. In terms of domain architecture, G5 7 spans 1187-1269 (YGPVKGDSIV…NELTEYGPET (83 aa)). The region spanning 1315–1397 (YGPVKGDSIV…NELTEFGGEK (83 aa)) is the G5 8 domain. The G5 9 domain occupies 1443 to 1525 (HGPKTGTPET…DKIVEFGGEK (83 aa)). Over residues 1481–1495 (QPGSKTITTPITVNP) the composition is skewed to polar residues. Basic and acidic residues predominate over residues 1509–1539 (EITKQPVDKIVEFGGEKPKDPKGPENPEKPS). The LPXTG sorting signal motif lies at 1595–1599 (LPKTG). A Pentaglycyl murein peptidoglycan amidated threonine modification is found at Thr-1598. A propeptide spans 1599–1627 (GLESTQKGLIFSSIIGIAGLMLLARRRKN) (removed by sortase).

The protein resides in the secreted. It is found in the cell wall. Its function is as follows. Promotes adhesion of bacterial cells to human squamous nasal epithelial cells, a phenomenon which is likely to be important in nasal colonization. Forms short, extremely dense and thin fibrils all over the bacterial surface. Does not bind to either buccal cells or non-differentiated keratinocytes. Promotes cellular aggregation leading to biofilm formation. The protein is Surface protein G (sasG) of Staphylococcus aureus (strain NCTC 8325 / PS 47).